Here is a 201-residue protein sequence, read N- to C-terminus: Large ribosomal subunit protein uL4 (201 aa).

Positions 45 to 71 are disordered; it reads AQKTRAEVTGSGKKPWRQKGTGRARAG.

Belongs to the universal ribosomal protein uL4 family. In terms of assembly, part of the 50S ribosomal subunit.

In terms of biological role, one of the primary rRNA binding proteins, this protein initially binds near the 5'-end of the 23S rRNA. It is important during the early stages of 50S assembly. It makes multiple contacts with different domains of the 23S rRNA in the assembled 50S subunit and ribosome. Its function is as follows. Forms part of the polypeptide exit tunnel. The sequence is that of Large ribosomal subunit protein uL4 from Shewanella pealeana (strain ATCC 700345 / ANG-SQ1).